The following is a 37-amino-acid chain: Large ribosomal subunit protein bL36 (37 aa).

It belongs to the bacterial ribosomal protein bL36 family.

The chain is Large ribosomal subunit protein bL36 from Pelotomaculum thermopropionicum (strain DSM 13744 / JCM 10971 / SI).